Consider the following 91-residue polypeptide: UPF0250 protein Pfl01_4965 (91 aa).

It belongs to the UPF0250 family.

The polypeptide is UPF0250 protein Pfl01_4965 (Pseudomonas fluorescens (strain Pf0-1)).